A 770-amino-acid polypeptide reads, in one-letter code: Metallothionein expression activator (770 aa).

The interval 77–97 (LVPSPKTGDGSSDKKNIDRTW) is disordered. Phosphoserine is present on residues Ser-80, Ser-122, Ser-247, Ser-249, and Ser-253. Thr-259 carries the phosphothreonine modification. A disordered region spans residues 286–323 (PPPTLISPRMSNTSINGSPSRKYHRQRYPNKSPESNGL). Polar residues predominate over residues 294–304 (RMSNTSINGSP). 3 positions are modified to phosphoserine: Ser-385, Ser-392, and Ser-483. Phosphothreonine is present on residues Thr-486 and Thr-501. Ser-564 bears the Phosphoserine mark. 2 C2H2-type zinc fingers span residues 603-627 (FECLYPNCNKVFKRRYNIRSHIQTH) and 633-657 (YSCDFPGCTKAFVRNHDLIRHKISH). Residues 662–685 (YICPCGKRFNREDALMVHRSRMIC) form a C2H2-type 3; atypical zinc finger. The disordered stretch occupies residues 699 to 770 (LTSPKKSLLD…RTLSNETDAL (72 aa)). The segment covering 705 to 745 (SLLDSPHDTSPVKETIARDKDGSVLMKMEEQLRDDMRKHGL) has biased composition (basic and acidic residues). A phosphoserine mark is found at Ser-709 and Ser-714. Over residues 754 to 770 (AHEQNSNRTLSNETDAL) the composition is skewed to polar residues.

The protein localises to the nucleus. Functionally, plays a role in regulating basal-level expression of CUP1. Activates EGT2 transcription in the absence of SWI5. In Saccharomyces cerevisiae (strain ATCC 204508 / S288c) (Baker's yeast), this protein is Metallothionein expression activator (ACE2).